A 1377-amino-acid polypeptide reads, in one-letter code: DNA-directed RNA polymerase subunit beta (1377 aa).

This sequence belongs to the RNA polymerase beta chain family. In terms of assembly, the RNAP catalytic core consists of 2 alpha, 1 beta, 1 beta' and 1 omega subunit. When a sigma factor is associated with the core the holoenzyme is formed, which can initiate transcription.

The enzyme catalyses RNA(n) + a ribonucleoside 5'-triphosphate = RNA(n+1) + diphosphate. Functionally, DNA-dependent RNA polymerase catalyzes the transcription of DNA into RNA using the four ribonucleoside triphosphates as substrates. The protein is DNA-directed RNA polymerase subunit beta of Brucella abortus (strain S19).